The following is a 216-amino-acid chain: Nudix hydrolase 26, chloroplastic (216 aa).

Residues 1–53 (MALYRPLLLHHPTSPSVTTFLRNYPSKPIKFSSLPFLHRCRKSRVSSSSARCC) constitute a chloroplast transit peptide. Positions 62 to 209 (GYRRNVGVCL…KKPVYKEVMS (148 aa)) constitute a Nudix hydrolase domain. The Nudix box motif lies at 95–116 (GGIDEGEDPRVAVMRELKEETG). The Mn(2+) site is built by glutamate 110 and glutamate 114.

It belongs to the Nudix hydrolase family. Mg(2+) serves as cofactor. It depends on Mn(2+) as a cofactor. Expressed in roots, leaves, stems and inflorescences.

The protein resides in the plastid. The protein localises to the chloroplast. Its function is as follows. Mediates the hydrolysis of some nucleoside diphosphate derivatives. Can use diadenosine 5',5'''-P(1)P(5) pentaphosphate (Ap(5)A), diadenosine 5',5'''-P(1)P(4) tetraphosphate (Ap(4)A) and diadenosine 5',5'''-P(1)P(3) triphosphate (Ap(3)A) as substrates. The polypeptide is Nudix hydrolase 26, chloroplastic (NUDT26) (Arabidopsis thaliana (Mouse-ear cress)).